A 485-amino-acid chain; its full sequence is Glutamate--tRNA ligase (485 aa).

Residues 12-22 (PSPTGEPHVGT) carry the 'HIGH' region motif. Zn(2+)-binding residues include Cys109, Cys111, Cys136, and His138. The 'KMSKS' region signature appears at 253 to 257 (KLSKR). Lys256 is an ATP binding site.

Belongs to the class-I aminoacyl-tRNA synthetase family. Glutamate--tRNA ligase type 1 subfamily. As to quaternary structure, monomer. It depends on Zn(2+) as a cofactor.

It is found in the cytoplasm. It catalyses the reaction tRNA(Glu) + L-glutamate + ATP = L-glutamyl-tRNA(Glu) + AMP + diphosphate. Functionally, catalyzes the attachment of glutamate to tRNA(Glu) in a two-step reaction: glutamate is first activated by ATP to form Glu-AMP and then transferred to the acceptor end of tRNA(Glu). The chain is Glutamate--tRNA ligase from Agrobacterium fabrum (strain C58 / ATCC 33970) (Agrobacterium tumefaciens (strain C58)).